We begin with the raw amino-acid sequence, 629 residues long: Methyl-accepting chemotaxis protein PscA (629 aa).

The Cytoplasmic portion of the chain corresponds to 1-9 (MKNLGFSKK). A helical membrane pass occupies residues 10–30 (ILLAAALIVVVAFSVFIVIND). Topologically, residues 31–276 (YRQRQSLKSS…AYAMLTEFRT (246 aa)) are periplasmic. The 223-residue stretch at 36-258 (SLKSSVKSEL…QGVATANWYV (223 aa)) folds into the Cache domain. Residues 277–297 (SAITAMVVVVMVIILLLGPLI) traverse the membrane as a helical segment. Positions 298-352 (RVLMQPLHQMGRAMRDIADGEGDLTKRLAITSHDEFGALAESFNHFVERIHTSIR) constitute an HAMP domain. Residues 298-629 (RVLMQPLHQM…LQQLVGSFRI (332 aa)) are Cytoplasmic-facing. Residues 357-593 (TAAQLGEVAT…SINVDITHIN (237 aa)) enclose the Methyl-accepting transducer domain.

Belongs to the methyl-accepting chemotaxis (MCP) protein family.

It localises to the cell inner membrane. Chemotactic-signal transducers respond to changes in the concentration of attractants and repellents in the environment, transduce a signal from the outside to the inside of the cell, and facilitate sensory adaptation through the variation of the level of methylation. PscA recognizes specifically and with high affinity L-Asp, D-Asp and L-Glu. It exerts a double function, in mediating chemotaxis to these amino acids and in modulating cyclic di-GMP (c-di-GMP) levels, causing alterations in biofilm development. Plays a key role in the infection process. It may facilitate bacterial entry into the plant. The polypeptide is Methyl-accepting chemotaxis protein PscA (Pseudomonas syringae pv. tomato (strain ATCC BAA-871 / DC3000)).